The sequence spans 385 residues: ELAV-like protein 4 (385 aa).

Positions 12-48 (TMEPQVSNGPTSNTSNGPSSNNRNCPSPMQTGATTDD) are disordered. Residues 18 to 33 (SNGPTSNTSNGPSSNN) show a composition bias toward low complexity. Residues 34–48 (RNCPSPMQTGATTDD) are compositionally biased toward polar residues. Residue Ser-38 is modified to Phosphoserine. RRM domains lie at 51 to 129 (TNLI…YARP) and 137 to 217 (ANLY…FANN). Ser-233 bears the Phosphoserine mark. Residue Arg-248 is modified to Asymmetric dimethylarginine; by CARM1; alternate. The residue at position 248 (Arg-248) is an Omega-N-methylarginine; by CARM1; alternate. An RRM 3 domain is found at 302 to 380 (WCIFVYNLSP…RVLQVSFKTN (79 aa)).

The protein belongs to the RRM elav family. In terms of assembly, component of a TAU mRNP complex, at least composed of IGF2BP1, ELAVL4 and G3BP. Associates with the EIF4F cap-binding complex, composed of EIF4G, EIF4A, EIF4E and PABP. Within the EIF4F cap-binding complex, interacts with EIF4A. Interacts with SMN (via Tudor domain) in an RNA-independent manner; the interaction is required for localization of ELAVL4 to RNA granules. Interacts with MAP1 light chain LC1 (via C-terminus); the interaction contributes to the association of ELAVL4 with microtubules. Interacts with MAP1 light chain LC2. Methylated by CARM1, which leads to reduced RNA-binding activity and enhanced interaction with SMN. Methylation at Arg-248 by CARM1 weakens protective binding to the 3'UTR of CDKN1A mRNA and down-regulates CDKN1A protein expression, thereby maintaining cells in a proliferative state. Methylation is inhibited by NGF, which facilitates neurite outgrowth. In terms of tissue distribution, expressed in pancreatic beta cells (at protein level). Expressed in the brain.

Its subcellular location is the cytoplasm. It is found in the perikaryon. The protein resides in the cell projection. It localises to the dendrite. The protein localises to the axon. Its subcellular location is the growth cone. In terms of biological role, RNA-binding protein that is involved in the post-transcriptional regulation of mRNAs. Plays a role in the regulation of mRNA stability, alternative splicing and translation. Binds to AU-rich element (ARE) sequences in the 3' untranslated region (UTR) of target mRNAs, including GAP43, VEGF, FOS, CDKN1A and ACHE mRNA. Many of the target mRNAs are coding for RNA-binding proteins, transcription factors and proteins involved in RNA processing and/or neuronal development and function. By binding to the mRNA 3'UTR, decreases mRNA deadenylation and thereby contributes to the stabilization of mRNA molecules and their protection from decay. Also binds to the polyadenylated (poly(A)) tail in the 3'UTR of mRNA, thereby increasing its affinity for mRNA binding. Mainly plays a role in neuron-specific RNA processing by stabilization of mRNAs such as GAP43, ACHE and mRNAs of other neuronal proteins, thereby contributing to the differentiation of neural progenitor cells, nervous system development, learning and memory mechanisms. Involved in the negative regulation of the proliferative activity of neuronal stem cells and in the positive regulation of neuronal differentiation of neural progenitor cells. Promotes neuronal differentiation of neural stem/progenitor cells in the adult subventricular zone of the hippocampus by binding to and stabilizing SATB1 mRNA. Binds and stabilizes MSI1 mRNA in neural stem cells. Exhibits increased binding to ACHE mRNA during neuronal differentiation, thereby stabilizing ACHE mRNA and enhancing its expression. Protects CDKN1A mRNA from decay by binding to its 3'-UTR. May bind to APP and BACE1 mRNAS and the BACE1AS lncRNA and enhance their stabilization. Plays a role in neurite outgrowth and in the establishment and maturation of dendritic arbors, thereby contributing to neocortical and hippocampal circuitry function. Stabilizes GAP43 mRNA and protects it from decay during postembryonic development in the brain. By promoting the stabilization of GAP43 mRNA, plays a role in NGF-mediated neurite outgrowth. Binds to BDNF long 3'UTR mRNA, thereby leading to its stabilization and increased dendritic translation after activation of PKC. By increasing translation of BDNF after nerve injury, may contribute to nerve regeneration. Acts as a stabilizing factor by binding to the 3'UTR of NOVA1 mRNA, thereby increasing its translation and enhancing its functional activity in neuron-specific splicing. Stimulates translation of mRNA in a poly(A)- and cap-dependent manner, possibly by associating with the EIF4F cap-binding complex. May also negatively regulate translation by binding to the 5'UTR of Ins2 mRNA, thereby repressing its translation. Upon glucose stimulation, Ins2 mRNA is released from ELAVL4 and translational inhibition is abolished. Also plays a role in the regulation of alternative splicing. May regulate alternative splicing of CALCA pre-mRNA into Calcitonin and Calcitonin gene-related peptide 1 (CGRP) by competing with splicing regulator TIAR for binding to U-rich intronic sequences of CALCA pre-mRNA. This is ELAV-like protein 4 (ELAVL4) from Homo sapiens (Human).